The following is a 1573-amino-acid chain: Pentafunctional AROM polypeptide (1573 aa).

The 3-dehydroquinate synthase stretch occupies residues 1-384 (MSNESNIITV…YEKHATVVSD (384 aa)). NAD(+) is bound by residues 46-48 (DSN), 83-86 (ESSK), 114-116 (GGV), and aspartate 119. Residue arginine 130 coordinates 7-phospho-2-dehydro-3-deoxy-D-arabino-heptonate. 139–140 (TT) serves as a coordination point for NAD(+). 7-phospho-2-dehydro-3-deoxy-D-arabino-heptonate contacts are provided by aspartate 146 and lysine 152. Lysine 161 provides a ligand contact to NAD(+). Asparagine 162 is a 7-phospho-2-dehydro-3-deoxy-D-arabino-heptonate binding site. Residues 179–182 (FLHT) and asparagine 190 each bind NAD(+). Glutamate 194 provides a ligand contact to Zn(2+). Residues 194-197 (EIIK) and lysine 250 each bind 7-phospho-2-dehydro-3-deoxy-D-arabino-heptonate. Glutamate 260 functions as the Proton acceptor; for 3-dehydroquinate synthase activity in the catalytic mechanism. 7-phospho-2-dehydro-3-deoxy-D-arabino-heptonate-binding positions include 264–268 (RNLLN) and histidine 271. Histidine 271 contacts Zn(2+). The active-site Proton acceptor; for 3-dehydroquinate synthase activity is histidine 275. 7-phospho-2-dehydro-3-deoxy-D-arabino-heptonate is bound by residues histidine 287 and lysine 356. Residue histidine 287 participates in Zn(2+) binding. Positions 397–843 (VDEFTKSSWD…WDVLHQSFGV (447 aa)) are EPSP synthase. Cysteine 825 functions as the For EPSP synthase activity in the catalytic mechanism. The segment at 863–1058 (NASIILIGMR…KTKKRSTFLT (196 aa)) is shikimate kinase. An ATP-binding site is contributed by 870–877 (GMRGAGKT). The 3-dehydroquinase stretch occupies residues 1059–1280 (LNYPRIEDAL…AAPGQLTVKQ (222 aa)). Residue histidine 1182 is the Proton acceptor; for 3-dehydroquinate dehydratase activity of the active site. Residue lysine 1211 is the Schiff-base intermediate with substrate; for 3-dehydroquinate dehydratase activity of the active site. Positions 1293–1573 (PEKFFLFGKP…FDAVYQKVIE (281 aa)) are shikimate dehydrogenase.

The protein in the N-terminal section; belongs to the sugar phosphate cyclases superfamily. Dehydroquinate synthase family. It in the 2nd section; belongs to the EPSP synthase family. In the 3rd section; belongs to the shikimate kinase family. This sequence in the 4th section; belongs to the type-I 3-dehydroquinase family. The protein in the C-terminal section; belongs to the shikimate dehydrogenase family. Homodimer. Zn(2+) is required as a cofactor.

The protein localises to the cytoplasm. It catalyses the reaction 7-phospho-2-dehydro-3-deoxy-D-arabino-heptonate = 3-dehydroquinate + phosphate. The enzyme catalyses 3-dehydroquinate = 3-dehydroshikimate + H2O. It carries out the reaction shikimate + NADP(+) = 3-dehydroshikimate + NADPH + H(+). The catalysed reaction is shikimate + ATP = 3-phosphoshikimate + ADP + H(+). It catalyses the reaction 3-phosphoshikimate + phosphoenolpyruvate = 5-O-(1-carboxyvinyl)-3-phosphoshikimate + phosphate. It functions in the pathway metabolic intermediate biosynthesis; chorismate biosynthesis; chorismate from D-erythrose 4-phosphate and phosphoenolpyruvate: step 2/7. The protein operates within metabolic intermediate biosynthesis; chorismate biosynthesis; chorismate from D-erythrose 4-phosphate and phosphoenolpyruvate: step 3/7. It participates in metabolic intermediate biosynthesis; chorismate biosynthesis; chorismate from D-erythrose 4-phosphate and phosphoenolpyruvate: step 4/7. Its pathway is metabolic intermediate biosynthesis; chorismate biosynthesis; chorismate from D-erythrose 4-phosphate and phosphoenolpyruvate: step 5/7. It functions in the pathway metabolic intermediate biosynthesis; chorismate biosynthesis; chorismate from D-erythrose 4-phosphate and phosphoenolpyruvate: step 6/7. In terms of biological role, the AROM polypeptide catalyzes 5 consecutive enzymatic reactions in prechorismate polyaromatic amino acid biosynthesis. The protein is Pentafunctional AROM polypeptide of Schizosaccharomyces pombe (strain 972 / ATCC 24843) (Fission yeast).